We begin with the raw amino-acid sequence, 842 residues long: Leucine--tRNA ligase (842 aa).

A 'HIGH' region motif is present at residues 44 to 55 (PYPSANGLHVGH). The 'KMSKS' region motif lies at 619-623 (KMSKS). Lys-622 is a binding site for ATP.

This sequence belongs to the class-I aminoacyl-tRNA synthetase family.

Its subcellular location is the cytoplasm. It catalyses the reaction tRNA(Leu) + L-leucine + ATP = L-leucyl-tRNA(Leu) + AMP + diphosphate. This Borrelia recurrentis (strain A1) protein is Leucine--tRNA ligase.